The primary structure comprises 505 residues: Probable glycine dehydrogenase (decarboxylating) subunit 2 (505 aa).

Lys274 bears the N6-(pyridoxal phosphate)lysine mark.

It belongs to the GcvP family. C-terminal subunit subfamily. As to quaternary structure, the glycine cleavage system is composed of four proteins: P, T, L and H. In this organism, the P 'protein' is a heterodimer of two subunits. The cofactor is pyridoxal 5'-phosphate.

It catalyses the reaction N(6)-[(R)-lipoyl]-L-lysyl-[glycine-cleavage complex H protein] + glycine + H(+) = N(6)-[(R)-S(8)-aminomethyldihydrolipoyl]-L-lysyl-[glycine-cleavage complex H protein] + CO2. Functionally, the glycine cleavage system catalyzes the degradation of glycine. The P protein binds the alpha-amino group of glycine through its pyridoxal phosphate cofactor; CO(2) is released and the remaining methylamine moiety is then transferred to the lipoamide cofactor of the H protein. This is Probable glycine dehydrogenase (decarboxylating) subunit 2 from Sulfurisphaera tokodaii (strain DSM 16993 / JCM 10545 / NBRC 100140 / 7) (Sulfolobus tokodaii).